We begin with the raw amino-acid sequence, 273 residues long: Large ribosomal subunit protein uL2 (273 aa).

Disordered stretches follow at residues 28–55 and 222–273; these read TPEKSLTRGKPAKAGRGAGGRISVRHRG and GMAM…SKRK. The span at 255 to 273 shows a compositional bias: basic residues; that stretch reads YKTRKKRRVSDRFIVSKRK.

It belongs to the universal ribosomal protein uL2 family. In terms of assembly, part of the 50S ribosomal subunit. Forms a bridge to the 30S subunit in the 70S ribosome.

One of the primary rRNA binding proteins. Required for association of the 30S and 50S subunits to form the 70S ribosome, for tRNA binding and peptide bond formation. It has been suggested to have peptidyltransferase activity; this is somewhat controversial. Makes several contacts with the 16S rRNA in the 70S ribosome. This Treponema pallidum (strain Nichols) protein is Large ribosomal subunit protein uL2.